Reading from the N-terminus, the 174-residue chain is Crossover junction endodeoxyribonuclease RuvC (174 aa).

Residues aspartate 16, glutamate 76, and aspartate 148 contribute to the active site. 3 residues coordinate Mg(2+): aspartate 16, glutamate 76, and aspartate 148.

Belongs to the RuvC family. As to quaternary structure, homodimer which binds Holliday junction (HJ) DNA. The HJ becomes 2-fold symmetrical on binding to RuvC with unstacked arms; it has a different conformation from HJ DNA in complex with RuvA. In the full resolvosome a probable DNA-RuvA(4)-RuvB(12)-RuvC(2) complex forms which resolves the HJ. The cofactor is Mg(2+).

It is found in the cytoplasm. It carries out the reaction Endonucleolytic cleavage at a junction such as a reciprocal single-stranded crossover between two homologous DNA duplexes (Holliday junction).. The RuvA-RuvB-RuvC complex processes Holliday junction (HJ) DNA during genetic recombination and DNA repair. Endonuclease that resolves HJ intermediates. Cleaves cruciform DNA by making single-stranded nicks across the HJ at symmetrical positions within the homologous arms, yielding a 5'-phosphate and a 3'-hydroxyl group; requires a central core of homology in the junction. The consensus cleavage sequence is 5'-(A/T)TT(C/G)-3'. Cleavage occurs on the 3'-side of the TT dinucleotide at the point of strand exchange. HJ branch migration catalyzed by RuvA-RuvB allows RuvC to scan DNA until it finds its consensus sequence, where it cleaves and resolves the cruciform DNA. In Rhodopseudomonas palustris (strain BisA53), this protein is Crossover junction endodeoxyribonuclease RuvC.